Consider the following 238-residue polypeptide: Ribonuclease PH (238 aa).

Phosphate-binding positions include arginine 86 and 124 to 126; that span reads GTR.

It belongs to the RNase PH family. In terms of assembly, homohexameric ring arranged as a trimer of dimers.

It catalyses the reaction tRNA(n+1) + phosphate = tRNA(n) + a ribonucleoside 5'-diphosphate. In terms of biological role, phosphorolytic 3'-5' exoribonuclease that plays an important role in tRNA 3'-end maturation. Removes nucleotide residues following the 3'-CCA terminus of tRNAs; can also add nucleotides to the ends of RNA molecules by using nucleoside diphosphates as substrates, but this may not be physiologically important. Probably plays a role in initiation of 16S rRNA degradation (leading to ribosome degradation) during starvation. The protein is Ribonuclease PH of Actinobacillus pleuropneumoniae serotype 5b (strain L20).